A 255-amino-acid polypeptide reads, in one-letter code: HTH-type transcriptional regulator SkgA (255 aa).

Residues 3–72 (VYTVKQMARL…LKDIQAALDQ (70 aa)) enclose the HTH merR-type domain. Positions 6–25 (VKQMARLSGVSVRALHHYDA) form a DNA-binding region, H-T-H motif.

Its function is as follows. Regulates the induction of katG (catalase-peroxidase) in stationary phase. In Caulobacter vibrioides (strain ATCC 19089 / CIP 103742 / CB 15) (Caulobacter crescentus), this protein is HTH-type transcriptional regulator SkgA (skgA).